Here is a 371-residue protein sequence, read N- to C-terminus: MPTQMEVEYWRRRYQRMNYERFAAANVIALITHAATQPLDMVRIRSQMLQEGKTFSGLGYQKGWYPFQIMEEIYAAGGGLRKFYSAFDTFFFRTVGYTTARVTAFGYFYDKVNKDPRRVARPDFLVAAGVLGGFIAGVVTNPIDIVYNRMQVDELYPQAARRNYSNTVQGLAKVAEEGALFRGAGANGFKLAAICSSMTNIYDWCKENSYFFFGPHWINRLWGTAVAVAIGTVVSMPFDMIRTRLHTMRPLPNGQMPYNGMFDCFNKIIKYECNSKWMSNFGSFYAGGEAYFLRLFLICYLSQFLVDYYNENYYDQEFWQPQRFHYQSGIDYDIHDPYTDAFNKKLVATYTTAAGGMGAAHPSGKDNLAII.

3 Solcar repeats span residues arginine 16–lysine 111, alanine 120–asparagine 208, and proline 215–phenylalanine 304. 6 helical membrane-spanning segments follow: residues phenylalanine 22–valine 42, threonine 89–tyrosine 109, valine 126–valine 146, alanine 184–tryptophan 204, leucine 221–isoleucine 241, and phenylalanine 281–leucine 301.

It belongs to the mitochondrial carrier (TC 2.A.29) family.

It is found in the membrane. The polypeptide is Macronuclear solute carrier homolog CR-MSC (Oxytricha trifallax (Sterkiella histriomuscorum)).